The sequence spans 404 residues: MDYSEIMVRHGELSTKGKNRMRFINKLKNNIQDVLAPFPAITVRSDRDRTHVSLNGTDYQPIVEALKLVFGVQALSPVYKLEKSVPLLVTAVQDIMTSLYRDGLTFKIATKRSDHAFELDSRELNSLLGGAVFEVLPNIQAQMKHPDVTLKVEIRDEAAYISYEEIKGAGGLPVGTSGKGMLMLSGGIDSPVAGYLALKRGLDIEVVHFASPPYTSPGALAKAQDLTRRLTRFGGNIQFIEVPFTEIQEEIKNKAPEAYLMTLTRRFMMRITDAIREQRKGLVIVNGESLGQVASQTLESMQAINAVTSTPIIRPVVTMDKLEIIEMAQAIDTFDISIQPFEDCCTIFAPDRPKTNPKLGNAEKYEECFDIDGLVQRAVSGIVVTEITPEIVNDEVENLIDALL.

Residues 60-165 (QPIVEALKLV…DEAAYISYEE (106 aa)) form the THUMP domain. ATP is bound by residues 183-184 (ML), 208-209 (HF), Arg-265, Gly-287, and Gln-296.

Belongs to the ThiI family.

It localises to the cytoplasm. The enzyme catalyses [ThiI sulfur-carrier protein]-S-sulfanyl-L-cysteine + a uridine in tRNA + 2 reduced [2Fe-2S]-[ferredoxin] + ATP + H(+) = [ThiI sulfur-carrier protein]-L-cysteine + a 4-thiouridine in tRNA + 2 oxidized [2Fe-2S]-[ferredoxin] + AMP + diphosphate. It catalyses the reaction [ThiS sulfur-carrier protein]-C-terminal Gly-Gly-AMP + S-sulfanyl-L-cysteinyl-[cysteine desulfurase] + AH2 = [ThiS sulfur-carrier protein]-C-terminal-Gly-aminoethanethioate + L-cysteinyl-[cysteine desulfurase] + A + AMP + 2 H(+). It participates in cofactor biosynthesis; thiamine diphosphate biosynthesis. In terms of biological role, catalyzes the ATP-dependent transfer of a sulfur to tRNA to produce 4-thiouridine in position 8 of tRNAs, which functions as a near-UV photosensor. Also catalyzes the transfer of sulfur to the sulfur carrier protein ThiS, forming ThiS-thiocarboxylate. This is a step in the synthesis of thiazole, in the thiamine biosynthesis pathway. The sulfur is donated as persulfide by IscS. The sequence is that of Probable tRNA sulfurtransferase from Streptococcus pyogenes serotype M1.